We begin with the raw amino-acid sequence, 217 residues long: Methylthioribulose-1-phosphate dehydratase (217 aa).

Positions 106 and 108 each coordinate Zn(2+).

Belongs to the aldolase class II family. MtnB subfamily. Zn(2+) is required as a cofactor.

It catalyses the reaction 5-(methylsulfanyl)-D-ribulose 1-phosphate = 5-methylsulfanyl-2,3-dioxopentyl phosphate + H2O. The protein operates within amino-acid biosynthesis; L-methionine biosynthesis via salvage pathway; L-methionine from S-methyl-5-thio-alpha-D-ribose 1-phosphate: step 2/6. Functionally, catalyzes the dehydration of methylthioribulose-1-phosphate (MTRu-1-P) into 2,3-diketo-5-methylthiopentyl-1-phosphate (DK-MTP-1-P). The protein is Methylthioribulose-1-phosphate dehydratase of Xanthomonas campestris pv. campestris (strain 8004).